The following is a 142-amino-acid chain: Large ribosomal subunit protein bL17 (142 aa).

Belongs to the bacterial ribosomal protein bL17 family. As to quaternary structure, part of the 50S ribosomal subunit. Contacts protein L32.

The polypeptide is Large ribosomal subunit protein bL17 (Chlamydia abortus (strain DSM 27085 / S26/3) (Chlamydophila abortus)).